A 730-amino-acid chain; its full sequence is Synaptogenesis protein syg-1 (730 aa).

A signal peptide spans 1-18 (MVRWQTWPLLLLFQLVTC). The Extracellular portion of the chain corresponds to 19–551 (QQLQQRIVEA…WIVITAKFDR (533 aa)). 5 Ig-like domains span residues 23–123 (QRIV…AKLT), 131–265 (PKIV…VKLS), 270–352 (PQIN…IKLN), 357–433 (ARIM…QILS), and 441–540 (PPTV…RNIL). Intrachain disulfides connect Cys44/Cys104, Cys152/Cys246, Cys292/Cys336, Cys378/Cys420, and Cys462/Cys519. 2 N-linked (GlcNAc...) asparagine glycosylation sites follow: Asn93 and Asn206. The chain crosses the membrane as a helical span at residues 552 to 572 (MVALAIISAGVLLVSLLCCLC). Residues 573–730 (MCRSNCRSRK…RPISRTSTHV (158 aa)) are Cytoplasmic-facing.

It belongs to the immunoglobulin superfamily. As to quaternary structure, interacts with skr-1. Interacts with syg-2. Interacts with the WAVE regulatory complex; the interaction leads to formation of a synaptic F-actin network that is required for synapse formation and axon branching. As to expression, expression in head motor neurons, occasionally in HSN neurons and weakly in other cells in the vulval region. Expressed in the primary synapse region of HSNL motor neuron.

Its subcellular location is the cell membrane. It is found in the cell projection. It localises to the axon. The protein resides in the synapse. In terms of biological role, cell adhesion protein. Involved in synapse formation in the HSNL egg-laying motor neuron. Inhibits assembly of the SCF(sel-10) E3 ubiquitin ligase complex at synapses, and protects them from elimination. Also required for F-actin assembly at the synaptic region and for axon branch formation. The chain is Synaptogenesis protein syg-1 from Caenorhabditis elegans.